A 345-amino-acid polypeptide reads, in one-letter code: Phosphoribosylformylglycinamidine cyclo-ligase (345 aa).

The protein belongs to the AIR synthase family.

It localises to the cytoplasm. The enzyme catalyses 2-formamido-N(1)-(5-O-phospho-beta-D-ribosyl)acetamidine + ATP = 5-amino-1-(5-phospho-beta-D-ribosyl)imidazole + ADP + phosphate + H(+). The protein operates within purine metabolism; IMP biosynthesis via de novo pathway; 5-amino-1-(5-phospho-D-ribosyl)imidazole from N(2)-formyl-N(1)-(5-phospho-D-ribosyl)glycinamide: step 2/2. The protein is Phosphoribosylformylglycinamidine cyclo-ligase of Klebsiella pneumoniae (strain 342).